A 454-amino-acid chain; its full sequence is Replicative DNA helicase DnaB (454 aa).

The tract at residues 1-149 (MSELFSERIP…LDEADRKIME (149 aa)) is N-terminal domain (NTD). Positions 163–176 (KDILVQTYDNIEML) are linker helix. One can recognise an SF4 helicase domain in the interval 179–445 (RDGEITGIPT…NKFVNLERRF (267 aa)). Residues 183-454 (ITGIPTGFTE…FDEAQIPPGA (272 aa)) form a C-terminal domain (CTD) region. Residues serine 213, glycine 215, lysine 216, threonine 217, and alanine 218 each coordinate ATP. The active-site Nucleophile is glutamate 241. Residues arginine 250 and glutamine 362 each contribute to the ATP site. Residues arginine 381, glutamate 382, and glycine 384 each coordinate ssDNA. Residues lysine 418, glutamine 419, and arginine 420 each contribute to the ATP site.

It belongs to the helicase family. DnaB subfamily. In terms of assembly, homohexamer. Interacts with DnaG primase, as DnaB(6):DnaG(3). Interacts with the N-terminus of DnaI (shown with DnaI of B.subtilis), forms a helicase DnaB(6):DnaI(6) complex. The DnaB-DnaI complex is disrupted by DnaD (DnaD and DnaI from B.subtilis). A stable complex DnaI(6):DnaB(6):DnaG(3) fragment can be isolated; DnaI and DnaG do not contact each other (DnaI in this complex is derived from B.subtilis). Forms a complex with DNA clamp loader protein tau (shown with B.subtilis HolA) tau(3):DnaB(6); a single ATP hydrolysis even is sufficient for complex formation.

It catalyses the reaction Couples ATP hydrolysis with the unwinding of duplex DNA at the replication fork by translocating in the 5'-3' direction. This creates two antiparallel DNA single strands (ssDNA). The leading ssDNA polymer is the template for DNA polymerase III holoenzyme which synthesizes a continuous strand.. It carries out the reaction ATP + H2O = ADP + phosphate + H(+). The main replicative DNA helicase, it participates in initiation and elongation during chromosome replication. Travels ahead of the DNA replisome, separating double-stranded (ds)DNA into templates for DNA synthesis. Binding of single-stranded (ss)DNA to the hexamer suggests a 2-nucleotide step size for the helicase and a hand-over-hand mechanism of DNA unwinding. Has ssDNA-stimulated ATPase activity. DnaG primase stimulates the helicase activity (the helicase direction was not determine but is probably 5'-3'). Loaded onto DNA by helicase loader DnaI (shown with DnaI of B.subtilis); ATP-binding enhances loading and subsequent ATP hydrolysis dissociates the complex, leaving helicase on the DNA. Binds ssDNA and less well dsDNA, in the presence of ADPNP (probably 5'-adenylyl beta, gamma-imidodiphosphate, but not ATP) binding to both DNAs is improved. This is Replicative DNA helicase DnaB from Geobacillus stearothermophilus (Bacillus stearothermophilus).